A 101-amino-acid chain; its full sequence is Urease subunit beta (101 aa).

The protein belongs to the urease beta subunit family. As to quaternary structure, heterotrimer of UreA (gamma), UreB (beta) and UreC (alpha) subunits. Three heterotrimers associate to form the active enzyme.

The protein localises to the cytoplasm. The catalysed reaction is urea + 2 H2O + H(+) = hydrogencarbonate + 2 NH4(+). It functions in the pathway nitrogen metabolism; urea degradation; CO(2) and NH(3) from urea (urease route): step 1/1. The polypeptide is Urease subunit beta (Variovorax paradoxus (strain S110)).